Consider the following 1304-residue polypeptide: NAD-dependent protein deacetylase Sir2B (1304 aa).

The 439-residue stretch at 28–466 (TEEEKKKVKE…LISIHNIKMK (439 aa)) folds into the Deacetylase sirtuin-type domain. NAD(+)-binding positions include 53 to 72 (GAGI…TGIW) and 274 to 277 (QNID). The Proton acceptor role is filled by histidine 294. 4 residues coordinate Zn(2+): cysteine 302, cysteine 305, cysteine 327, and cysteine 330. NAD(+) contacts are provided by residues 371–373 (GSS), 399–401 (NYQ), and valine 417. 3 disordered regions span residues 545–585 (EHNN…SSSI), 749–827 (KVKS…DKDN), and 1154–1203 (EIKY…DDNN). Low complexity-rich tracts occupy residues 548 to 585 (NNNN…SSSI), 756 to 806 (NNNN…ISDH), and 1182 to 1203 (DDNN…DDNN).

This sequence belongs to the sirtuin family. Class IV subfamily. It depends on Zn(2+) as a cofactor.

The catalysed reaction is N(6)-acetyl-L-lysyl-[protein] + NAD(+) + H2O = 2''-O-acetyl-ADP-D-ribose + nicotinamide + L-lysyl-[protein]. Regulates the expression of the surface antigen-coding var genes central to the malaria pathogenesis. Cooperates with Sir2A to mediate silencing and mutual exclusive expression of only 1 of the 60 subtelomeric var genes at a time, coding for functionally different but epitopically variant versions of the erythrocyte membrane protein 1 (PfEMP1) molecule, to evade the detection by host immune surveillance. In Plasmodium falciparum (isolate 3D7), this protein is NAD-dependent protein deacetylase Sir2B.